We begin with the raw amino-acid sequence, 233 residues long: MKTCITKGIVTVSLTAILLSCSSTWAAGKGGVGLAATRLVYSEGEEQISLGVRNTSPDVPYLIQSWVMTPDNKKSADFIITPPLFVLNPANENLLRIMYIGAPLAKDRETLFFTSVRAVPSTTKREEGNTLKIATQSVIKLFWRPKGLAYPLGEAPAKLRCTSSADMVTVSNPTPYFITLTDLKIGGKLVKNQMISPFDKYQFSLPKGAKNSSVTYRTINDYGAETPQLNCKS.

An N-terminal signal peptide occupies residues 1-26 (MKTCITKGIVTVSLTAILLSCSSTWA).

This sequence belongs to the periplasmic pilus chaperone family.

It localises to the periplasm. Part of the elfADCG fimbrial operon, which could be required for adherence to host epithelial cells. Could be required for the biogenesis of the ElfA fimbriae. The chain is Probable fimbrial chaperone protein ElfD (elfD) from Escherichia coli O157:H7.